The following is a 307-amino-acid chain: Bidirectional sugar transporter SWEET11 (307 aa).

The Extracellular segment spans residues 1–14 (MAGGFLSMANPAVT). The chain crosses the membrane as a helical span at residues 15–35 (LSGVAGNIISFLVFLAPVATF). The MtN3/slv 1 domain occupies 17–100 (GVAGNIISFL…VLYLVYAPRR (84 aa)). The Cytoplasmic portion of the chain corresponds to 36–47 (LQVYKKKSTGGY). Residues 48 to 68 (SSVPYVVALFSSVLWIFYALV) form a helical membrane-spanning segment. Residues 69 to 74 (KTNSRP) are Extracellular-facing. A helical membrane pass occupies residues 75-95 (LLTINAFGCGVEAAYIVLYLV). Residues 96–107 (YAPRRARLRTLA) lie on the Cytoplasmic side of the membrane. The helical transmembrane segment at 108–128 (FFLLLDVAAFALIVVTTLYLV) threads the bilayer. At 129–135 (PKPHQVK) the chain is on the extracellular side. Residues 136 to 156 (FLGSVCLAFSMAVFVAPLSII) form a helical membrane-spanning segment. Residues 136–219 (FLGSVCLAFS…MGLYFWYRKP (84 aa)) form the MtN3/slv 2 domain. Topologically, residues 157 to 168 (FKVIKTKSVEFM) are cytoplasmic. Residues 169 to 189 (PIGLSVCLTLSAVAWFCYGLF) traverse the membrane as a helical segment. The Extracellular portion of the chain corresponds to 190 to 194 (TKDPY). A helical transmembrane segment spans residues 195-215 (VMYPNVGGFFFSCVQMGLYFW). Residues 216 to 307 (YRKPRNTAVL…PEVIEITAAV (92 aa)) are Cytoplasmic-facing.

The protein belongs to the SWEET sugar transporter family. As to quaternary structure, interacts with COPT1 and COPT2. Interacts with APX8. As to expression, mostly expressed in panicles and anthers. Also detected in leaves (leaf collar, leaf auricle, leaf ligule), roots, sheaths, culms and culm nodes.

It is found in the cell membrane. Mediates both low-affinity uptake and efflux of sugar across the plasma membrane. Required for pollen viability. Involved in the transport of copper, in cooperation with COPT1 and COPT2. Its function is as follows. Confers sensitivity to bacterial blight mediated by X.oryzae pv. oryzae (Xoo) in its Xa13 allelic form (e.g. cv. IR24), probably by providing the sugar required for the pathogen growth, or by reducing copper contents in xylem. However, a recessive resistance can be associated with the xa13 allele (in which the promoter is mutated leading to reduced induction upon pathogen infection, e.g. cv. IRBB13), specifically toward Xoo Philippine race 6 and Indian race PXO8. This is Bidirectional sugar transporter SWEET11 (SWEET11) from Oryza sativa subsp. japonica (Rice).